Reading from the N-terminus, the 92-residue chain is Small ribosomal subunit protein bS18c (92 aa).

It belongs to the bacterial ribosomal protein bS18 family. In terms of assembly, part of the 30S ribosomal subunit.

It is found in the plastid. The sequence is that of Small ribosomal subunit protein bS18c (rps18) from Epifagus virginiana (Beechdrops).